The following is a 155-amino-acid chain: S-ribosylhomocysteine lyase (155 aa).

Fe cation contacts are provided by histidine 54, histidine 58, and cysteine 122.

Belongs to the LuxS family. In terms of assembly, homodimer. It depends on Fe cation as a cofactor.

The catalysed reaction is S-(5-deoxy-D-ribos-5-yl)-L-homocysteine = (S)-4,5-dihydroxypentane-2,3-dione + L-homocysteine. Involved in the synthesis of autoinducer 2 (AI-2) which is secreted by bacteria and is used to communicate both the cell density and the metabolic potential of the environment. The regulation of gene expression in response to changes in cell density is called quorum sensing. Catalyzes the transformation of S-ribosylhomocysteine (RHC) to homocysteine (HC) and 4,5-dihydroxy-2,3-pentadione (DPD). The protein is S-ribosylhomocysteine lyase of Deinococcus deserti (strain DSM 17065 / CIP 109153 / LMG 22923 / VCD115).